The sequence spans 413 residues: Type IV pilus assembly protein TapC (413 aa).

Transmembrane regions (helical) follow at residues 180–200, 227–247, 286–306, and 386–406; these read YPAM…LFVI, FMQH…FLYV, LSTT…AAGA, and IMVV…LPIF.

Belongs to the GSP F family.

It localises to the cell inner membrane. Functionally, involved in the translocation of the type IV pilin. This is Type IV pilus assembly protein TapC (tapC) from Aeromonas hydrophila.